The following is a 1325-amino-acid chain: Protein PHYTOCHROME-DEPENDENT LATE-FLOWERING (1325 aa).

2 stretches are compositionally biased toward polar residues: residues 313-331 and 504-515; these read IGSTRNTQDQGSNSVSVSG and NFPQTSWNVNPG. Disordered regions lie at residues 313–371, 462–558, 593–616, 852–875, and 1160–1325; these read IGST…MPGL, EPFE…EFSG, ANEAMQQRQHQAQMAAKRRTNSLP, VAGQASGEASKHGNTGNTPNNSTQ, and QQQQ…GNNS. Basic and acidic residues predominate over residues 518–529; sequence IEKEPKKEEQFS. The span at 596-607 shows a compositional bias: low complexity; sequence AMQQRQHQAQMA. The segment covering 863–875 has biased composition (polar residues); it reads HGNTGNTPNNSTQ. The segment covering 1160 to 1224 has biased composition (low complexity); the sequence is QQQQQQQLQQ…QQQATASPLQ (65 aa). Polar residues predominate over residues 1225 to 1239; it reads SVLSPPQVGSPSAGI. Residues 1240–1262 are compositionally biased toward low complexity; the sequence is TQQQLQQSSPQQMSQRTPMSPQQ. 2 stretches are compositionally biased toward polar residues: residues 1263-1286 and 1293-1325; these read VNQRTPMSPQISSGAMHPMSTSNL and PQLSSQTMGSVGSITNSPMELQGPKNNSAGNNS.

Component of a red light-dependent nuclear complex made of PHL, PHYB and CO. Interacts directly with PHYB and CO; CO binding requires the presence of PHYB. Mostly expressed in cotyledons and leaves, both in mesophyll and vasculature cells. Also present in roots, hypocotyls and shoot apices.

It is found in the nucleus. Its subcellular location is the nuclear body. The protein localises to the cytoplasmic granule. The protein resides in the cytoplasm. Triggers photoperiod-monitored flowering by repressing PHYB-dependent flowering negative regulation, probably through physical interactions with PHYB and CO. This chain is Protein PHYTOCHROME-DEPENDENT LATE-FLOWERING, found in Arabidopsis thaliana (Mouse-ear cress).